The primary structure comprises 1037 residues: Presequence protease, mitochondrial (1037 aa).

The N-terminal 28 residues, 1 to 28, are a transit peptide targeting the mitochondrion; that stretch reads MWRCGGRQGLCVLRRLSGGHAHHRAWRW. A Zn(2+)-binding site is contributed by H104. Catalysis depends on E107, which acts as the Proton acceptor. H108 lines the Zn(2+) pocket. C119 and C556 form a disulfide bridge. Residue E180 is part of the active site. E205 serves as a coordination point for Zn(2+). K759 is modified (N6-acetyllysine). K770 is modified (N6-acetyllysine; alternate). K770 carries the post-translational modification N6-succinyllysine; alternate. The span at 804 to 814 shows a compositional bias: basic residues; that stretch reads GRSKKERRPVR. The tract at residues 804–834 is disordered; the sequence is GRSKKERRPVRPHTVEKPVPSSSGGDAHVPH. K849 is subject to N6-succinyllysine. At K884 the chain carries N6-acetyllysine. Position 946 is an N6-succinyllysine (K946).

This sequence belongs to the peptidase M16 family. PreP subfamily. Monomer and homodimer; homodimerization is induced by binding of the substrate. Requires Zn(2+) as cofactor. In terms of processing, a disulfide bond locks the enzyme in the closed conformation preventing substrate entry into the catalytic chamber. In terms of tissue distribution, widely expressed. Expressed at higher level in muscle and heart compared to brain, pancreas, liver, lung and placenta.

It localises to the mitochondrion. It is found in the mitochondrion matrix. Its activity is regulated as follows. Mainly exists in a closed and catalytically competent conformation but a closed-to-open switch allows substrate entry into the catalytic chamber. Substrate binding induces closure and dimerization. A disulfide bond may lock the enzyme in a closed conformation preventing substrate entry into the catalytic chamber, participating in redox regulation of the enzyme. Inhibited by metal-chelating agents. Inhibited by nickel and zinc excess, and slightly activated by manganese. Its function is as follows. Metalloendopeptidase of the mitochondrial matrix that functions in peptide cleavage and degradation rather than in protein processing. Has an ATP-independent activity. Specifically cleaves peptides in the range of 5 to 65 residues. Shows a preference for cleavage after small polar residues and before basic residues, but without any positional preference. Degrades the transit peptides of mitochondrial proteins after their cleavage. Also degrades other unstructured peptides. It is also able to degrade amyloid-beta protein 40, one of the peptides produced by APP processing, when it accumulates in mitochondrion. It is a highly efficient protease, at least toward amyloid-beta protein 40. Cleaves that peptide at a specific position and is probably not processive, releasing digested peptides intermediates that can be further cleaved subsequently. It is also able to degrade amyloid-beta protein 42. The polypeptide is Presequence protease, mitochondrial (Homo sapiens (Human)).